Reading from the N-terminus, the 393-residue chain is Probable alpha-1,6-mannosyltransferase MNN10 (393 aa).

Residues 1–52 (MSSVPYNSQLPISNHLEYDEDEKKSRGSKLGLKYKMIYWRKTLCSSLARWRK) are Cytoplasmic-facing. A helical; Signal-anchor for type II membrane protein membrane pass occupies residues 53–73 (LILLISLALFLFIWISDSTIS). Over 74–393 (RNPSTTSFQG…RKWYTRFFFP (320 aa)) the chain is Lumenal. Positions 77–97 (STTSFQGQNSNDNKLSNTGSS) are disordered.

It belongs to the glycosyltransferase 34 family. As to quaternary structure, component of the M-Pol II complex composed of ANP1, MNN9, MNN10, MNN11 and HOC1.

The protein resides in the endoplasmic reticulum membrane. The protein localises to the golgi apparatus. It localises to the cis-Golgi network membrane. Functionally, required for polarized growth and efficient budding. Its function is as follows. The M-Pol II complex possesses alpha-1,6-mannosyltransferase activity and is probably involved in the elongation of the mannan backbone of N-linked glycans on cell wall and periplasmic proteins. The sequence is that of Probable alpha-1,6-mannosyltransferase MNN10 (MNN10) from Saccharomyces cerevisiae (strain ATCC 204508 / S288c) (Baker's yeast).